The following is a 936-amino-acid chain: Isoleucine--tRNA ligase (936 aa).

Residues 58 to 68 carry the 'HIGH' region motif; that stretch reads PYANGRAHLGT. Position 561 (Glu561) interacts with L-isoleucyl-5'-AMP. The 'KMSKS' region signature appears at 602–606; it reads KMSKS. An ATP-binding site is contributed by Lys605. Zn(2+) is bound by residues Cys899, Cys902, Cys919, and Cys922.

Belongs to the class-I aminoacyl-tRNA synthetase family. IleS type 1 subfamily. As to quaternary structure, monomer. It depends on Zn(2+) as a cofactor.

The protein localises to the cytoplasm. It carries out the reaction tRNA(Ile) + L-isoleucine + ATP = L-isoleucyl-tRNA(Ile) + AMP + diphosphate. In terms of biological role, catalyzes the attachment of isoleucine to tRNA(Ile). As IleRS can inadvertently accommodate and process structurally similar amino acids such as valine, to avoid such errors it has two additional distinct tRNA(Ile)-dependent editing activities. One activity is designated as 'pretransfer' editing and involves the hydrolysis of activated Val-AMP. The other activity is designated 'posttransfer' editing and involves deacylation of mischarged Val-tRNA(Ile). The protein is Isoleucine--tRNA ligase of Coxiella burnetii (strain Dugway 5J108-111).